The sequence spans 2130 residues: DNA polymerase zeta catalytic subunit (2130 aa).

Disordered regions lie at residues 528–635, 734–891, 927–954, and 1189–1243; these read PAES…TGTL, GCEI…HDEA, FTPS…SNTP, and QAKD…SAAQ. Positions 553 to 574 are enriched in low complexity; it reads TPIKSISSKSKSSPSKTPTTPI. The segment covering 620 to 629 has biased composition (polar residues); that stretch reads PRLSLQLDQG. Basic and acidic residues predominate over residues 735-753; sequence CEIERPHRSEGSALDELKP. Composition is skewed to polar residues over residues 771–786, 794–808, and 818–835; these read SEIQ…TSLD, LSQS…SMNG, and DSSS…SVSE. A compositionally biased stretch (basic and acidic residues) spans 840–860; that stretch reads LESKPKKSDETARSCDEKLQR. Polar residues predominate over residues 938-954; the sequence is TETTPQLSPKSNESNTP. Over residues 1228–1243 the composition is skewed to low complexity; sequence PSSQSSEQSVSSSAAQ. Zn(2+) is bound by residues Cys-2041, Cys-2045, Cys-2054, and Cys-2057. Residues Cys-2086, Cys-2089, Cys-2098, and Cys-2103 each contribute to the [4Fe-4S] cluster site. Residues 2086 to 2103 carry the CysB motif motif; the sequence is CQACCGRLGSLQCDSLDC.

This sequence belongs to the DNA polymerase type-B family. In terms of assembly, catalytic subunit of the zeta DNA polymerase complex, which consists of PolZ1/DNApol-zeta and the accessory component PolZ2/Rev7. Interacts with the apurinic/apyrimidinic (AP) endonuclease Rrp1; the interaction is likely indirect and mediated via PolZ2. It depends on [4Fe-4S] cluster as a cofactor.

It carries out the reaction DNA(n) + a 2'-deoxyribonucleoside 5'-triphosphate = DNA(n+1) + diphosphate. Its activity is regulated as follows. Inhibited by tetracyclic diterpene antibiotic aphidicolin. In terms of biological role, as the catalytic subunit of the DNA polymerase zeta complex, plays a crucial role in translesion DNA synthesis (TLS) and various DNA repair mechanisms. Lacks an intrinsic 3'-5' exonuclease activity and thus has no proofreading function. During homologous recombination (HR) repair, has a overlapping role with the error-prone translesion polymerase eta to initiate repair synthesis which is completed by end joining or another polymerase that can bind and reinitiate synthesis. May participate in the Rrp1-dependent base excision repair (BER) pathway responsible for repair of DNA lesions that gives rise to apurinic/apyrimidinic (AP) sites. Unlike mammalian orthologs, it is not an error-prone polymerase. This chain is DNA polymerase zeta catalytic subunit, found in Drosophila melanogaster (Fruit fly).